We begin with the raw amino-acid sequence, 260 residues long: Endonuclease NucS (260 aa).

This sequence belongs to the NucS endonuclease family.

It localises to the cytoplasm. Its function is as follows. Cleaves both 3' and 5' ssDNA extremities of branched DNA structures. The protein is Endonuclease NucS of Methanopyrus kandleri (strain AV19 / DSM 6324 / JCM 9639 / NBRC 100938).